The primary structure comprises 307 residues: MISVRTLVISEYGAYVYVKKNMLVIKKGDKKVEISPSEVDEILITVSCSISTSALSLALTHGISVMFLNSRETPWGILLPSIVTETVKTKKAQYEAIVVRKDNRYGEEIISSKIYNQSVHLKYWARVTGTKNDYKELLDKDEPAAARVYWQNISQLLPKDIGFDGRDVDGTDQFNMALNYSYAILYNTIFKYLVIAGLDPYLGFIHKDRPGNESLVYDFSEMFKPYIDFLLVRALRSGFRLKVKGGLIEENSRGDLAKLIRKGMEENVKEESDHNPKTLIQAIRAHAVKLASSIREGKEYRGFKLVM.

Residues glutamate 142, histidine 206, and glutamate 221 each coordinate Mn(2+).

This sequence belongs to the CRISPR-associated endonuclease Cas1 family. In terms of assembly, homodimer, forms a heterotetramer with a Cas2 homodimer. Forms oligomers, probably binds nucleic acids as a homodimer. It depends on Mg(2+) as a cofactor. Requires Mn(2+) as cofactor.

In terms of biological role, CRISPR (clustered regularly interspaced short palindromic repeat), is an adaptive immune system that provides protection against mobile genetic elements (viruses, transposable elements and conjugative plasmids). CRISPR clusters contain spacers, sequences complementary to antecedent mobile elements, and target invading nucleic acids. CRISPR clusters are transcribed and processed into CRISPR RNA (crRNA). Acts as a dsDNA endonuclease. Involved in the integration of spacer DNA into the CRISPR cassette. Its function is as follows. In vitro catalyzes a concerted transesterification reaction on branched DNA, as would be expected during integration of protospacers into the CRISPR leader sequence; Cas2 is not required in vitro. This reaction requires a 3'-OH group at the branch point. Binds ss- and dsDNA and ss- and dsRNA with approximately equal affinity. May be able to anneal complementary DNA strands. The chain is CRISPR-associated endonuclease Cas1 2 from Saccharolobus solfataricus (strain ATCC 35092 / DSM 1617 / JCM 11322 / P2) (Sulfolobus solfataricus).